The chain runs to 77 residues: U8-lycotoxin-Ls1l (77 aa).

Residues 1–20 (MKLMIFTGLVLFAIVSLIEA) form the signal peptide. Positions 21 to 26 (QAENEK) are excised as a propeptide.

It belongs to the neurotoxin 19 (CSTX) family. 08 (U8-Lctx) subfamily. Contains 4 disulfide bonds. As to expression, expressed by the venom gland.

The protein localises to the secreted. The protein is U8-lycotoxin-Ls1l of Lycosa singoriensis (Wolf spider).